A 319-amino-acid chain; its full sequence is MKRIAILTSGGDAPGMNAATRAVVRKAIYEGLEVYGINYGFLGLVNGDIRKLELGSVGDLLHRGGTFLYSARYPEFATEEGQLKGIEQLKKHQIDGLVVIGGDGSYHGAEALTKRGFPTIGIPGTIDNDISGTDFTIGFDTALNTVLDALDKIRDTATSHERTFIIEVMGRDAGDIALWSGLAGGAEAIIVPEESFNMDDVVDRLNKGRERGKKHSIIVVAEGVMSGNEFAKQLAEYGDYHARVTVLGHVQRGGSPTAFDRVLASRLGARSVELLLENRGGLAVGIRENRIVENDISEILKEKHTLDQKLFDLASILSI.

G11 lines the ATP pocket. 21–25 (RAVVR) is an ADP binding site. Residues 72 to 73 (RY) and 102 to 105 (GDGS) contribute to the ATP site. D103 is a binding site for Mg(2+). Residue 125-127 (TID) participates in substrate binding. Catalysis depends on D127, which acts as the Proton acceptor. ADP is bound at residue R154. Substrate-binding positions include R162 and 169–171 (MGR). ADP is bound by residues 185 to 187 (GAE), R211, and 213 to 215 (KKH). Substrate contacts are provided by residues E222, R243, and 249–252 (HVQR).

This sequence belongs to the phosphofructokinase type A (PFKA) family. ATP-dependent PFK group I subfamily. Prokaryotic clade 'B1' sub-subfamily. As to quaternary structure, homotetramer. The cofactor is Mg(2+).

The protein resides in the cytoplasm. It catalyses the reaction beta-D-fructose 6-phosphate + ATP = beta-D-fructose 1,6-bisphosphate + ADP + H(+). It participates in carbohydrate degradation; glycolysis; D-glyceraldehyde 3-phosphate and glycerone phosphate from D-glucose: step 3/4. With respect to regulation, allosterically activated by ADP and other diphosphonucleosides, and allosterically inhibited by phosphoenolpyruvate. Functionally, catalyzes the phosphorylation of D-fructose 6-phosphate to fructose 1,6-bisphosphate by ATP, the first committing step of glycolysis. The protein is ATP-dependent 6-phosphofructokinase of Listeria monocytogenes serotype 4b (strain CLIP80459).